Reading from the N-terminus, the 768-residue chain is Cullin-3-A (768 aa).

Residues 677-698 (VAAKQGESDPERKETRQKVDDD) form a disordered region. Residues 682–698 (GESDPERKETRQKVDDD) are compositionally biased toward basic and acidic residues. The Cullin neddylation domain maps to 698-760 (DRKHEIEAAI…REYLARTPED (63 aa)). Residue Lys712 forms a Glycyl lysine isopeptide (Lys-Gly) (interchain with G-Cter in NEDD8) linkage.

It belongs to the cullin family. Component of multiple BCR (BTB-CUL3-RBX1) E3 ubiquitin-protein ligase complexes formed of cul3, rbx1 and a variable BTB domain-containing protein acting as both, adapter to cullin and substrate recognition subunit. Interacts with btbd6. In terms of processing, neddylated. Attachment of NEDD8 is required for the E3 ubiquitin-protein ligase activity of the SCF-like complex.

It localises to the nucleus. It functions in the pathway protein modification; protein ubiquitination. Probable core component of cullin-based SCF-like E3 ubiquitin-protein ligase complexes which mediate the ubiquitination and subsequent proteasomal degradation of target proteins. The E3 ubiquitin-protein ligase activity of the complex is dependent on the neddylation of the cullin subunit. Involved in ER-Golgi transport by regulating the size of COPII coats, thereby playing a key role in collagen export, which is required for embryonic stem (ES) cells division. May play a role in the regulation of mittotic entry via ubiquitination of aurka. The protein is Cullin-3-A (cul3a) of Xenopus laevis (African clawed frog).